The sequence spans 29 residues: Sarcolamban B (29 aa).

The chain crosses the membrane as a helical span at residues L7–A27.

Interacts with SERCA. In terms of tissue distribution, strongly expressed in embryonic and larval somatic muscles and postembryonic heart.

It localises to the sarcoplasmic reticulum membrane. Its function is as follows. Plays an essential role in the regulation of calcium transport at the sarcoplasmic reticulum (SR), which is secondarily required for regular muscle contraction. The polypeptide is Sarcolamban B (Drosophila melanogaster (Fruit fly)).